The primary structure comprises 524 residues: 56 kDa type-specific antigen (524 aa).

Positions 1–22 (MKKIMLIASAMSALSLPFSASA) are cleaved as a signal peptide. Residues 67-87 (LTTGLPFGGTLAAGMTIAPGF) traverse the membrane as a helical segment. Disordered regions lie at residues 112–132 (SKGE…RKRF) and 387–422 (EKLA…KGKE). Basic and acidic residues-rich tracts occupy residues 395-405 (EDAKNQGEGDC) and 413-422 (EKSKEGKGKE). A helical membrane pass occupies residues 472–492 (TGMVASGALGVAINAAEGVYV).

The protein resides in the cell membrane. Functionally, may be an adherent factor for rickettsial adsorption to the host-cell surface and a determinant of virulence of individual rickettsial strain. It is the major outer membrane protein. The chain is 56 kDa type-specific antigen from Orientia tsutsugamushi (Rickettsia tsutsugamushi).